The sequence spans 309 residues: MVSVLHSISTIIIIAEFVWGNLSNGLIVLKNCLDWINIKELSTLDQILILLAISRISLIWETLLMWVKDKLISSITIEELKMIMFSFMLSSHFSLWLATALSTFYLFRIANCSWQIFLYLKWRLKHLIVQMLLGSVMFLIANIIQITITLEKRFYQYKGNTSVNSIQNEFALLIEMMLFNMTIFSVIPFLLALISFFLLIFSLWKHLQRMQLNSREDRDPSTKAHRNALGIMVSFLLLYTMYVLSLLISWIAQKNQSELVHIICMITSLLNPSVHSSILILGNFKLKQSSLCILRHLGCRLKSQNTPTT.

Topologically, residues 1–7 (MVSVLHS) are extracellular. Residues 8-28 (ISTIIIIAEFVWGNLSNGLIV) traverse the membrane as a helical segment. Residues 29-46 (LKNCLDWINIKELSTLDQ) are Cytoplasmic-facing. Residues 47 to 67 (ILILLAISRISLIWETLLMWV) traverse the membrane as a helical segment. At 68 to 81 (KDKLISSITIEELK) the chain is on the extracellular side. Residues 82-102 (MIMFSFMLSSHFSLWLATALS) traverse the membrane as a helical segment. Residues 103 to 127 (TFYLFRIANCSWQIFLYLKWRLKHL) lie on the Cytoplasmic side of the membrane. Residues 128 to 148 (IVQMLLGSVMFLIANIIQITI) form a helical membrane-spanning segment. Topologically, residues 149–182 (TLEKRFYQYKGNTSVNSIQNEFALLIEMMLFNMT) are extracellular. Residues asparagine 160 and asparagine 180 are each glycosylated (N-linked (GlcNAc...) asparagine). The helical transmembrane segment at 183-203 (IFSVIPFLLALISFFLLIFSL) threads the bilayer. The Cytoplasmic portion of the chain corresponds to 204–227 (WKHLQRMQLNSREDRDPSTKAHRN). Residues 228–248 (ALGIMVSFLLLYTMYVLSLLI) form a helical membrane-spanning segment. Residues 249–261 (SWIAQKNQSELVH) lie on the Extracellular side of the membrane. Asparagine 255 carries N-linked (GlcNAc...) asparagine glycosylation. Residues 262–282 (IICMITSLLNPSVHSSILILG) form a helical membrane-spanning segment. The Cytoplasmic segment spans residues 283 to 309 (NFKLKQSSLCILRHLGCRLKSQNTPTT).

This sequence belongs to the G-protein coupled receptor T2R family.

It is found in the membrane. Its function is as follows. Putative taste receptor which may play a role in the perception of bitterness. In Rattus norvegicus (Rat), this protein is Taste receptor type 2 member 124.